Here is a 550-residue protein sequence, read N- to C-terminus: Rhodopsin kinase grk7-b (550 aa).

Residues 22–45 (SSEGDAKELQKRRKSLSLPPPDVS) are disordered. A Phosphoserine modification is found at Ser36. Positions 57-174 (YQSICVEQPI…QNSPFYDRFL (118 aa)) constitute an RGS domain. Residues 189–451 (FYEFRILGKG…DDDPRKHAFF (263 aa)) form the Protein kinase domain. ATP-binding positions include 195–203 (LGKGGFGEV) and Lys218. The active-site Proton acceptor is Asp314. The region spanning 452–517 (KSINFQRLEA…GAVPISWQKE (66 aa)) is the AGC-kinase C-terminal domain. Phosphoserine is present on Ser487. The interval 531–550 (SREVTGGGNSGEKSGVCSIL) is disordered. Cysteine methyl ester is present on Cys547. Cys547 is lipidated: S-geranylgeranyl cysteine. The propeptide at 548–550 (SIL) is removed in mature form.

It belongs to the protein kinase superfamily. AGC Ser/Thr protein kinase family. GPRK subfamily. In terms of processing, autophosphorylated in vitro at Ser-487. Phosphorylation at Ser-36 is regulated by light and activated by cAMP. As to expression, retina, cones.

The protein localises to the membrane. The catalysed reaction is L-threonyl-[rhodopsin] + ATP = O-phospho-L-threonyl-[rhodopsin] + ADP + H(+). It carries out the reaction L-seryl-[rhodopsin] + ATP = O-phospho-L-seryl-[rhodopsin] + ADP + H(+). Its function is as follows. Retina-specific kinase involved in the shutoff of the photoresponse and adaptation to changing light conditions via cone opsin phosphorylation, including rhodopsin (RHO). This is Rhodopsin kinase grk7-b (grk7-b) from Xenopus laevis (African clawed frog).